Here is a 378-residue protein sequence, read N- to C-terminus: Alanine racemase (378 aa).

K40 serves as the catalytic Proton acceptor; specific for D-alanine. Residue K40 is modified to N6-(pyridoxal phosphate)lysine. R140 provides a ligand contact to substrate. The active-site Proton acceptor; specific for L-alanine is Y270. M317 provides a ligand contact to substrate.

This sequence belongs to the alanine racemase family. Requires pyridoxal 5'-phosphate as cofactor.

The catalysed reaction is L-alanine = D-alanine. The protein operates within amino-acid biosynthesis; D-alanine biosynthesis; D-alanine from L-alanine: step 1/1. Catalyzes the interconversion of L-alanine and D-alanine. May also act on other amino acids. The sequence is that of Alanine racemase (alr) from Lacticaseibacillus paracasei (strain ATCC 334 / BCRC 17002 / CCUG 31169 / CIP 107868 / KCTC 3260 / NRRL B-441) (Lactobacillus paracasei).